Consider the following 191-residue polypeptide: Fe/S biogenesis protein NfuA (191 aa).

Residues Cys-149 and Cys-152 each coordinate [4Fe-4S] cluster.

It belongs to the NfuA family. In terms of assembly, homodimer. Requires [4Fe-4S] cluster as cofactor.

Its function is as follows. Involved in iron-sulfur cluster biogenesis. Binds a 4Fe-4S cluster, can transfer this cluster to apoproteins, and thereby intervenes in the maturation of Fe/S proteins. Could also act as a scaffold/chaperone for damaged Fe/S proteins. This chain is Fe/S biogenesis protein NfuA, found in Salmonella choleraesuis (strain SC-B67).